Here is a 430-residue protein sequence, read N- to C-terminus: UDP-glucuronate 4-epimerase 3 (430 aa).

A run of 2 helical transmembrane segments spans residues 29–49 (SVAKLAFWSLVFVGLIFIFFY) and 90–110 (GFSVLVTGAAGFVGTHVSAAL). 92 to 123 (SVLVTGAAGFVGTHVSAALKRRGDGVLGLDNF) lines the NAD(+) pocket. Y242 acts as the Proton acceptor in catalysis.

The protein belongs to the NAD(P)-dependent epimerase/dehydratase family. As to quaternary structure, homodimer. In terms of tissue distribution, in roots, leaves, siliques, flowers, pollen and stems.

It localises to the golgi apparatus. The protein localises to the golgi stack membrane. The enzyme catalyses UDP-alpha-D-glucuronate = UDP-alpha-D-galacturonate. In terms of biological role, involved in the synthesis of the negatively charged monosaccharide that forms the backbone of pectic cell wall components. The chain is UDP-glucuronate 4-epimerase 3 (GAE3) from Arabidopsis thaliana (Mouse-ear cress).